We begin with the raw amino-acid sequence, 232 residues long: Orotate phosphoribosyltransferase (232 aa).

5-phospho-alpha-D-ribose 1-diphosphate is bound by residues arginine 107, lysine 108, lysine 111, and 133 to 141; that span reads EDLTTDGGS. Residue threonine 137 participates in orotate binding.

The protein belongs to the purine/pyrimidine phosphoribosyltransferase family. PyrE subfamily. Homodimer. It depends on Mg(2+) as a cofactor.

It catalyses the reaction orotidine 5'-phosphate + diphosphate = orotate + 5-phospho-alpha-D-ribose 1-diphosphate. The protein operates within pyrimidine metabolism; UMP biosynthesis via de novo pathway; UMP from orotate: step 1/2. Functionally, catalyzes the transfer of a ribosyl phosphate group from 5-phosphoribose 1-diphosphate to orotate, leading to the formation of orotidine monophosphate (OMP). The sequence is that of Orotate phosphoribosyltransferase from Cereibacter sphaeroides (strain ATCC 17023 / DSM 158 / JCM 6121 / CCUG 31486 / LMG 2827 / NBRC 12203 / NCIMB 8253 / ATH 2.4.1.) (Rhodobacter sphaeroides).